Consider the following 409-residue polypeptide: Shaggy-related protein kinase NtK-1 (409 aa).

The segment at 1–27 (MTSVGLAPVSGLRESSSHSVGVDRLPE) is disordered. A Protein kinase domain is found at 73–357 (YMAERIVGQG…ALEAVTHAFF (285 aa)). ATP is bound by residues 79–87 (VGQGSFGVV) and K102. D198 (proton acceptor) is an active-site residue.

This sequence belongs to the protein kinase superfamily. CMGC Ser/Thr protein kinase family. GSK-3 subfamily. In terms of processing, autophosphorylated mainly on threonine and serine residues.

The catalysed reaction is L-seryl-[protein] + ATP = O-phospho-L-seryl-[protein] + ADP + H(+). It carries out the reaction L-threonyl-[protein] + ATP = O-phospho-L-threonyl-[protein] + ADP + H(+). Functionally, may mediate extracellular signals to regulate transcription in differentiating cells. In Nicotiana tabacum (Common tobacco), this protein is Shaggy-related protein kinase NtK-1 (NTK-1).